The following is a 300-amino-acid chain: Type II restriction enzyme HindIII (300 aa).

It carries out the reaction Endonucleolytic cleavage of DNA to give specific double-stranded fragments with terminal 5'-phosphates.. A P subtype restriction enzyme that recognizes the double-stranded sequence 5'-AAGCTT-3' and cleaves after A-1. The chain is Type II restriction enzyme HindIII from Haemophilus influenzae (strain ATCC 51907 / DSM 11121 / KW20 / Rd).